The chain runs to 908 residues: Zinc finger and BTB domain-containing protein 41 (908 aa).

The segment at 38–59 is disordered; the sequence is TQAPERPTPEAAQRCQELPPSP. In terms of domain architecture, BTB spans 89-153; that stretch reads CDLLIIVEGK…LYTSEFFVYK (65 aa). The C2H2-type 1 zinc-finger motif lies at 208 to 231; it reads HQCKFCSRHFCYKKSLENHLAKTH. The span at 252–261 shows a compositional bias: basic residues; the sequence is RRSKRNRKCP. Residues 252–344 form a disordered region; it reads RRSKRNRKCP…EAGDSAGSIH (93 aa). Positions 267–276 are enriched in acidic residues; sequence TSDDEQESGD. Basic and acidic residues predominate over residues 279–296; sequence DNLHQESSEKERSDRNDS. A compositionally biased stretch (acidic residues) spans 297 to 336; the sequence is EDPGSEYNAEDEELEEEVSDEDSDTEQSDKDNDAEEEPEA. 13 C2H2-type zinc fingers span residues 360-382, 388-410, 421-444, 462-484, 490-513, 517-540, 546-568, 574-596, 602-624, 630-653, 667-689, 695-717, and 723-746; these read LQCP…TRVH, FECD…RKKH, HKCP…KRFH, WKCD…MILH, FKCT…EKFH, FPCD…ECTH, WTCF…LRIH, HLCS…LRVH, YECD…KKIH, HQCE…KSVH, HQCD…FRTH, YKCQ…LVIH, and FNCQ…DHVH.

The protein resides in the nucleus. Its function is as follows. May be involved in transcriptional regulation. This Mus musculus (Mouse) protein is Zinc finger and BTB domain-containing protein 41 (Zbtb41).